The chain runs to 335 residues: Acetyl-coenzyme A carboxylase carboxyl transferase subunit alpha (335 aa).

In terms of domain architecture, CoA carboxyltransferase C-terminal spans 48–308 (TLELKVDALR…KEILIEELKA (261 aa)).

It belongs to the AccA family. In terms of assembly, acetyl-CoA carboxylase is a heterohexamer composed of biotin carboxyl carrier protein (AccB), biotin carboxylase (AccC) and two subunits each of ACCase subunit alpha (AccA) and ACCase subunit beta (AccD).

It is found in the cytoplasm. The catalysed reaction is N(6)-carboxybiotinyl-L-lysyl-[protein] + acetyl-CoA = N(6)-biotinyl-L-lysyl-[protein] + malonyl-CoA. It participates in lipid metabolism; malonyl-CoA biosynthesis; malonyl-CoA from acetyl-CoA: step 1/1. Component of the acetyl coenzyme A carboxylase (ACC) complex. First, biotin carboxylase catalyzes the carboxylation of biotin on its carrier protein (BCCP) and then the CO(2) group is transferred by the carboxyltransferase to acetyl-CoA to form malonyl-CoA. In Pelodictyon phaeoclathratiforme (strain DSM 5477 / BU-1), this protein is Acetyl-coenzyme A carboxylase carboxyl transferase subunit alpha.